Consider the following 717-residue polypeptide: DNA-directed RNA polymerase subunit beta' (717 aa).

Zn(2+) is bound by residues C71, C73, C91, and C94. Mg(2+) is bound by residues D481, D483, and D485.

This sequence belongs to the RNA polymerase beta' chain family. RpoC1 subfamily. In terms of assembly, in plastids the minimal PEP RNA polymerase catalytic core is composed of four subunits: alpha, beta, beta', and beta''. When a (nuclear-encoded) sigma factor is associated with the core the holoenzyme is formed, which can initiate transcription. The cofactor is Mg(2+). It depends on Zn(2+) as a cofactor.

It localises to the plastid. Its subcellular location is the chloroplast. It carries out the reaction RNA(n) + a ribonucleoside 5'-triphosphate = RNA(n+1) + diphosphate. In terms of biological role, DNA-dependent RNA polymerase catalyzes the transcription of DNA into RNA using the four ribonucleoside triphosphates as substrates. This chain is DNA-directed RNA polymerase subunit beta', found in Chlorokybus atmophyticus (Soil alga).